A 138-amino-acid polypeptide reads, in one-letter code: Large ribosomal subunit protein uL16 (138 aa).

The segment covering 1-16 (MLIPKRVKFRRQHRPN) has biased composition (basic residues). Residues 1-25 (MLIPKRVKFRRQHRPNRSGMSKGGN) form a disordered region.

It belongs to the universal ribosomal protein uL16 family. Part of the 50S ribosomal subunit.

Its function is as follows. Binds 23S rRNA and is also seen to make contacts with the A and possibly P site tRNAs. The sequence is that of Large ribosomal subunit protein uL16 from Corynebacterium urealyticum (strain ATCC 43042 / DSM 7109).